The chain runs to 721 residues: Polyribonucleotide nucleotidyltransferase (721 aa).

Mg(2+) is bound by residues Asp495 and Asp501. The KH domain maps to 562-621 (PRLLSFRIDPELIGTVIGPGGRTIKGITERTNTKIDIEDGGIVTIASHDGAAAEEAQKII). Positions 631 to 699 (GEIFTGVVTR…SRGRINLTLR (69 aa)) constitute an S1 motif domain. The tract at residues 702 to 721 (SQNSGMSYPEPTPTPVAPLN) is disordered. Positions 711–721 (EPTPTPVAPLN) are enriched in pro residues.

Belongs to the polyribonucleotide nucleotidyltransferase family. Mg(2+) serves as cofactor.

It is found in the cytoplasm. The catalysed reaction is RNA(n+1) + phosphate = RNA(n) + a ribonucleoside 5'-diphosphate. In terms of biological role, involved in mRNA degradation. Catalyzes the phosphorolysis of single-stranded polyribonucleotides processively in the 3'- to 5'-direction. This Prochlorococcus marinus (strain MIT 9312) protein is Polyribonucleotide nucleotidyltransferase.